The primary structure comprises 195 residues: Apoptosis-associated speck-like protein containing a CARD (195 aa).

Residues 1 to 91 (MGCTRDAILD…AEQLQETMSK (91 aa)) form the Pyrin domain. Residues Lys55 and Lys174 each participate in a glycyl lysine isopeptide (Lys-Gly) (interchain with G-Cter in ubiquitin) cross-link. One can recognise a CARD domain in the interval 107–195 (TAKPGLHFVD…PYLVDDLEQS (89 aa)). The residue at position 195 (Ser195) is a Phosphoserine.

Self-associates; enforced oligomerization induces apoptosis, NF-kappa-B regulation and interleukin-1 beta secretion. Homooligomers can form disk-like particles of approximately 12 nm diameter and approximately 1 nm height. Component of several inflammasomes containing one pattern recognition receptor/sensor, such as NLRP1, NLRP2, NLRP3, NLRP6, NLRC4, AIM2, MEFV or NOD2, and probably NLRC4 or NLRP12. Major component of the ASC pyroptosome, a 1-2 um supramolecular assembly (one per macrophage cell) which consists of oligomerized PYCARD dimers and CASP1. Interacts with CASP1 (precursor form); the interaction induces activation of CASP1 leading to the processing of interleukin-1 beta; PYCARD competes with RIPK2 for binding to CASP1. Interacts with NLRP3; the interaction requires the homooligomerization of NLRP3. Interacts with NLRP2, NLRC4, MEFV, CARD16, AIM2, NOD2, RIGI, RIPK2, PYDC1, PYDC2, NLRP10, CASP8, CHUK, IKBKB and BAX. Component of the AIM2 PANoptosome complex, a multiprotein complex that drives inflammatory cell death (PANoptosis). In terms of processing, phosphorylated. 'Lys-63'-linked polyubiquitination by TRAF3 is critical for speck formation and inflammasome activation. 'Lys-63'-linked deubiquitinated by USP50; a crucial step for NLRP3-mediated inflammasome activation. 'Lys-63'-linked polyubiquitination by PELI1 is also critical for speck formation and inflammasome activation. Deubiquitinated by USP3 that cleaves 'Lys-48'-linked ubiquitin chains and strengthens its stability by blocking proteasomal degradation.

Its subcellular location is the cytoplasm. The protein resides in the inflammasome. It localises to the endoplasmic reticulum. The protein localises to the mitochondrion. It is found in the nucleus. Its function is as follows. Functions as a key mediator in apoptosis and inflammation. Promotes caspase-mediated apoptosis involving predominantly caspase-8 and also caspase-9 in a probable cell type-specific manner. Involved in activation of the mitochondrial apoptotic pathway, promotes caspase-8-dependent proteolytic maturation of BID independently of FADD in certain cell types and also mediates mitochondrial translocation of BAX and activates BAX-dependent apoptosis coupled to activation of caspase-9, -2 and -3. Involved in innate immune response by acting as an integral adapter in the assembly of various inflammasomes (NLRP2, NLRP3, NLRP6 and AIM2) which recruit and activate caspase-1 leading to processing and secretion of pro-inflammatory cytokines. Caspase-1-dependent inflammation leads to macrophage pyroptosis, a form of cell death. The function as activating adapter in different types of inflammasomes is mediated by the pyrin and CARD domains and their homotypic interactions. Clustered PYCARD nucleates the formation of caspase-1 filaments through the interaction of their respective CARD domains, acting as a platform for of caspase-1 polymerization. In the NLRC4 inflammasomes seems not be required but facilitates the processing of procaspase-1. In cooperation with NOD2 involved in an inflammasome activated by bacterial muramyl dipeptide leading to caspase-1 activation. May be involved in RIGI-triggered pro-inflammatory responses and inflammasome activation. In collaboration with AIM2 which detects cytosolic double-stranded DNA may also be involved in a caspase-1-independent cell death that involves caspase-8. In adaptive immunity may be involved in maturation of dendritic cells to stimulate T-cell immunity and in cytoskeletal rearrangements coupled to chemotaxis and antigen uptake may be involved in post-transcriptional regulation of the guanine nucleotide exchange factor DOCK2; the latter function is proposed to involve the nuclear form. Also involved in transcriptional activation of cytokines and chemokines independent of the inflammasome; this function may involve AP-1, NF-kappa-B, MAPK and caspase-8 signaling pathways. For regulation of NF-kappa-B activating and inhibiting functions have been reported. Modulates NF-kappa-B induction at the level of the IKK complex by inhibiting kinase activity of CHUK and IKBK. Proposed to compete with RIPK2 for association with CASP1 thereby down-regulating CASP1-mediated RIPK2-dependent NF-kappa-B activation and activating interleukin-1 beta processing. Modulates host resistance to DNA virus infection, probably by inducing the cleavage of and inactivating CGAS in presence of cytoplasmic double-stranded DNA. This Bos taurus (Bovine) protein is Apoptosis-associated speck-like protein containing a CARD (PYCARD).